Here is a 2890-residue protein sequence, read N- to C-terminus: Bifunctional DNA-directed RNA polymerase subunit beta-beta' (2890 aa).

A DNA-directed RNA polymerase subunit beta region spans residues 1-1377 (MSKKIPLKNR…DINIFGDDVD (1377 aa)). The interval 1384–2890 (PIVIKEDDRP…LRTLEDGPKF (1507 aa)) is DNA-directed RNA polymerase subunit beta'. Residues Cys1449, Cys1451, Cys1465, and Cys1468 each coordinate Zn(2+). 3 residues coordinate Mg(2+): Asp1849, Asp1851, and Asp1853. Zn(2+) is bound by residues Cys2179, Cys2253, Cys2260, and Cys2263.

It in the N-terminal section; belongs to the RNA polymerase beta chain family. This sequence in the C-terminal section; belongs to the RNA polymerase beta' chain family. In terms of assembly, the RNAP catalytic core consists of 2 alpha, 1 beta/beta' and 1 omega subunit. When a sigma factor is associated with the core the holoenzyme is formed, which can initiate transcription. It depends on Mg(2+) as a cofactor. Requires Zn(2+) as cofactor.

It carries out the reaction RNA(n) + a ribonucleoside 5'-triphosphate = RNA(n+1) + diphosphate. In terms of biological role, DNA-dependent RNA polymerase catalyzes the transcription of DNA into RNA using the four ribonucleoside triphosphates as substrates. This chain is Bifunctional DNA-directed RNA polymerase subunit beta-beta' (rpoBC), found in Helicobacter pylori (strain HPAG1).